We begin with the raw amino-acid sequence, 149 residues long: UPF0260 protein PFLU_1520 (149 aa).

Belongs to the UPF0260 family.

The polypeptide is UPF0260 protein PFLU_1520 (Pseudomonas fluorescens (strain SBW25)).